The following is a 691-amino-acid chain: Elongation factor G (691 aa).

The 275-residue stretch at 8–282 (ERVRNIGIAA…AVVDYLPAPV (275 aa)) folds into the tr-type G domain. GTP-binding positions include 17-24 (AHIDAGKT), 81-85 (DTPGH), and 135-138 (NKMD).

The protein belongs to the TRAFAC class translation factor GTPase superfamily. Classic translation factor GTPase family. EF-G/EF-2 subfamily.

Its subcellular location is the cytoplasm. In terms of biological role, catalyzes the GTP-dependent ribosomal translocation step during translation elongation. During this step, the ribosome changes from the pre-translocational (PRE) to the post-translocational (POST) state as the newly formed A-site-bound peptidyl-tRNA and P-site-bound deacylated tRNA move to the P and E sites, respectively. Catalyzes the coordinated movement of the two tRNA molecules, the mRNA and conformational changes in the ribosome. The protein is Elongation factor G of Prochlorococcus marinus (strain MIT 9211).